Consider the following 553-residue polypeptide: Cytochrome P450 86A2 (553 aa).

A helical membrane pass occupies residues 2–20 (DVSNTMLLVAVVAAYWLWF). Cys459 contacts heme.

Belongs to the cytochrome P450 family. Heme serves as cofactor. Expressed in leaves, stems, flowers and siliques. Expressed at low levels in roots. Expressed in guard cells of cotyledons and leaves.

The protein localises to the membrane. The catalysed reaction is an organic molecule + reduced [NADPH--hemoprotein reductase] + O2 = an alcohol + oxidized [NADPH--hemoprotein reductase] + H2O + H(+). In terms of biological role, catalyzes the omega-hydroxylation of various fatty acids (FA). Acts on saturated and unsaturated fatty acids with chain lengths from C12 to C18. Plays a major role in the biosynthesis of extracellular lipids. Involved in the biosynthesis of hydroxylated fatty acids required for cutin biosynthesis, cuticle development and repression of bacterial type III gene expression. This is Cytochrome P450 86A2 (CYP86A2) from Arabidopsis thaliana (Mouse-ear cress).